The chain runs to 816 residues: MLRPQGLLWLPLLFTSVCVMLNSNVLLWITALAIKFTLIDSQAQYPVVNTNYGKIQGLRTPLPSEILGPVEQYLGVPYASPPTGERRFQPPESPSSWTGIRNATQFSAVCPQHLDERFLLHDMLPIWFTTSLDTLMTYVQDQNEDCLYLNIYVPMEDDIHEQNSKKPVMVYIHGGSYMEGTGNMIDGSILASYGNVIVITINYRLGILGFLSTGDQAAKGNYGLLDQIQALRWIEENVGAFGGDPKRVTIFGSGAGASCVSLLTLSHYSEGLFQKAIIQSGTALSSWAVNYQPAKYTRILADKVGCNMLDTTDMVECLKNKNYKELIQQTITPATYHIAFGPVIDGDVIPDDPQILMEQGEFLNYDIMLGVNQGEGLKFVDGIVDNEDGVTPNDFDFSVSNFVDNLYGYPEGKDTLRETIKFMYTDWADKENPETRRKTLVALFTDHQWVAPAVATADLHAQYGSPTYFYAFYHHCQSEMKPSWADSAHGDEVPYVFGIPMIGPTELFSCNFSKNDVMLSAVVMTYWTNFAKTGDPNQPVPQDTKFIHTKPNRFEEVAWSKYNPKDQLYLHIGLKPRVRDHYRATKVAFWLELVPHLHNLNEIFQYVSTTTKVPPPDMTSFPYGTRRSPAKIWPTTKRPAITPANNPKHSKDPHKTGPEDTTVLIETKRDYSTELSVTIAVGASLLFLNILAFAALYYKKDKRRHETHRHPSPQRNTTNDITHIQNEEIMSLQMKQLEHDHECESLQAHDTLRLTCPPDYTLTLRRSPDDIPFMTPNTITMIPNTLMGMQPLHTFKTFSGGQNSTNLPHGHSTTRV.

Residues 1–43 (MLRPQGLLWLPLLFTSVCVMLNSNVLLWITALAIKFTLIDSQA) form the signal peptide. At 44-676 (QYPVVNTNYG…TKRDYSTELS (633 aa)) the chain is on the extracellular side. A glycan (N-linked (GlcNAc...) asparagine) is linked at N102. Intrachain disulfides connect C110/C146 and C306/C317. The interaction with NRXN1 stretch occupies residues 359-364 (QGEFLN). A disulfide bond links C476 and C510. N-linked (GlcNAc...) asparagine glycosylation is present at N511. The tract at residues 636–659 (TKRPAITPANNPKHSKDPHKTGPE) is disordered. Basic and acidic residues predominate over residues 649–658 (HSKDPHKTGP). Residues 677–697 (VTIAVGASLLFLNILAFAALY) traverse the membrane as a helical segment. The Cytoplasmic portion of the chain corresponds to 698–816 (YKKDKRRHET…LPHGHSTTRV (119 aa)). Phosphoserine is present on S712.

The protein belongs to the type-B carboxylesterase/lipase family. Homodimer. Interacts with NRXN1 in a calcium-dependent manner. Interaction with neurexins is mediated by heparan sulfate glycan modification on neurexin. Interacts through its C-terminus with DLG4/PSD-95 third PDZ domain. Expressed in fetal and adult brain, prostate and testis.

The protein resides in the cell membrane. It is found in the postsynaptic density membrane. Its function is as follows. Cell surface protein involved in cell-cell-interactions via its interactions with neurexin family members. The polypeptide is Neuroligin-4, Y-linked (NLGN4Y) (Homo sapiens (Human)).